The following is a 150-amino-acid chain: Nucleoside diphosphate kinase (150 aa).

Residues Lys10, Phe58, Arg86, Thr92, Arg103, and Asn113 each coordinate ATP. His116 functions as the Pros-phosphohistidine intermediate in the catalytic mechanism.

The protein belongs to the NDK family. In terms of assembly, homohexamer. The cofactor is Mg(2+).

It carries out the reaction a 2'-deoxyribonucleoside 5'-diphosphate + ATP = a 2'-deoxyribonucleoside 5'-triphosphate + ADP. The catalysed reaction is a ribonucleoside 5'-diphosphate + ATP = a ribonucleoside 5'-triphosphate + ADP. In terms of biological role, major role in the synthesis of nucleoside triphosphates other than ATP. The ATP gamma phosphate is transferred to the NDP beta phosphate via a ping-pong mechanism, using a phosphorylated active-site intermediate. This chain is Nucleoside diphosphate kinase (awd), found in Drosophila yakuba (Fruit fly).